The following is a 243-amino-acid chain: tRNA (guanine-N(1)-)-methyltransferase (243 aa).

S-adenosyl-L-methionine-binding positions include Gly111 and 130–135 (IGDYVL).

Belongs to the RNA methyltransferase TrmD family. As to quaternary structure, homodimer.

The protein localises to the cytoplasm. It carries out the reaction guanosine(37) in tRNA + S-adenosyl-L-methionine = N(1)-methylguanosine(37) in tRNA + S-adenosyl-L-homocysteine + H(+). Functionally, specifically methylates guanosine-37 in various tRNAs. The polypeptide is tRNA (guanine-N(1)-)-methyltransferase (Acholeplasma laidlawii (strain PG-8A)).